We begin with the raw amino-acid sequence, 197 residues long: Putative carbonic anhydrase YvdA (197 aa).

Zn(2+)-binding residues include cysteine 41, aspartate 43, histidine 99, and cysteine 102.

It belongs to the beta-class carbonic anhydrase family. It depends on Zn(2+) as a cofactor.

It carries out the reaction hydrogencarbonate + H(+) = CO2 + H2O. Functionally, reversible hydration of carbon dioxide. The chain is Putative carbonic anhydrase YvdA (yvdA) from Bacillus subtilis (strain 168).